An 85-amino-acid polypeptide reads, in one-letter code: COMM domain-containing protein 6 (85 aa).

M1 is subject to N-acetylmethionine. The COMM domain maps to 18-85 (QLIDFEWKLG…KEIAAIIETV (68 aa)).

This sequence belongs to the COMM domain-containing protein 6 family. As to quaternary structure, component of the commander complex consisting of the CCC subcomplex and the retriever subcomplex. Component of the CCC (COMMD/CCDC22/CCDC93) subcomplex consisting of COMMD1, COMMD2, COMMD3, COMMD4, COMMD5, COMMD6, COMMD7, COMMD8, COMMD9, COMMD10, CCDC22 and CCDC93; within the complex forms a heterodimer with COMMD1. May form a homodimer with isoform 1. Interacts with RELA, RELB, NFKB1/p105. Does not interact with NFKBIB. Interacts with CCDC22, CCDC93, SCNN1B, CUL4A.

The protein localises to the nucleus. It localises to the cytoplasm. Its function is as follows. Scaffold protein in the commander complex that is essential for endosomal recycling of transmembrane cargos; the commander complex is composed of the CCC subcomplex and the retriever subcomplex. May modulate activity of cullin-RING E3 ubiquitin ligase (CRL) complexes. Down-regulates activation of NF-kappa-B. Inhibits TNF-induced NFKB1 activation. The chain is COMM domain-containing protein 6 (COMMD6) from Bos taurus (Bovine).